The chain runs to 121 residues: Oxalate-binding protein (121 aa).

Residues 49–117 (RMKLPPGSSV…GNTDLEFLAV (69 aa)) enclose the Cupin type-2 domain. Mn(2+) is bound by residues His61, His63, and Glu68. Tyr70 is a binding site for oxalate. Mn(2+) is bound at residue His102.

Homodimer.

Its function is as follows. Binds oxalate. This Thermotoga maritima (strain ATCC 43589 / DSM 3109 / JCM 10099 / NBRC 100826 / MSB8) protein is Oxalate-binding protein.